A 205-amino-acid polypeptide reads, in one-letter code: Pyridoxal 5'-phosphate synthase subunit PdxT (205 aa).

53-55 (GES) serves as a coordination point for L-glutamine. The active-site Nucleophile is C85. Residues R112 and 140–141 (IR) contribute to the L-glutamine site. Active-site charge relay system residues include H176 and E178.

This sequence belongs to the glutaminase PdxT/SNO family. As to quaternary structure, in the presence of PdxS, forms a dodecamer of heterodimers. Only shows activity in the heterodimer.

It carries out the reaction aldehydo-D-ribose 5-phosphate + D-glyceraldehyde 3-phosphate + L-glutamine = pyridoxal 5'-phosphate + L-glutamate + phosphate + 3 H2O + H(+). The enzyme catalyses L-glutamine + H2O = L-glutamate + NH4(+). It participates in cofactor biosynthesis; pyridoxal 5'-phosphate biosynthesis. Its function is as follows. Catalyzes the hydrolysis of glutamine to glutamate and ammonia as part of the biosynthesis of pyridoxal 5'-phosphate. The resulting ammonia molecule is channeled to the active site of PdxS. In Haloquadratum walsbyi (strain DSM 16790 / HBSQ001), this protein is Pyridoxal 5'-phosphate synthase subunit PdxT.